Reading from the N-terminus, the 387-residue chain is Norsolorinic acid reductase stcV (387 aa).

Asp-69 is a binding site for NADP(+). Tyr-74 functions as the Proton donor in the catalytic mechanism. His-148 is a substrate binding site. Residues 178–179, Gln-204, 233–243, and 301–309 each bind NADP(+); these read SD, GALGRGQYKSA, and RTVEQLEAN.

It belongs to the aldo/keto reductase family. Aldo/keto reductase 2 subfamily.

It functions in the pathway mycotoxin biosynthesis; sterigmatocystin biosynthesis. In terms of biological role, norsolorinic acid reductase; part of the gene cluster that mediates the biosynthesis of sterigmatocystin (ST), a polyketide-derived furanocoumarin which is part of the most toxic and carcinogenic compounds among the known mycotoxins. The first step in the biosynthesis of sterigmatocystin is the production of hexanoate by the fatty acid synthase (FAS) units stcJ and stcK. The polyketide backbone is assembled by the non-reducing polyketide synthase stcA by condensation of the starter hexanoyl-CoA and 7 malonyl-CoA extender units followed by cyclization and release of norsolorinic acid. Norsolorinic acid is the first stable intermediate in the biosynthesis of sterigmatocystin and is converted into averantin (AVN) by the ketoreductase stcE which reduces the hexanoate ketone to an alcohol. Averantin is then oxidized into 5'-hydroxyaverantin (HAVN) by the cytochrome P450 monooxygenase stcF. 5'-hydroxyaverantin is further converted to 5'-oxyaverantin (OAVN) by the 5'-hydroxyaverantin dehydrogenase stcG. The next step is the conversion of OAVN into averufin (AVF) which is catalyzed by a yet to be identified enzyme. The cytochrome P450 monooxygenase stcB and the flavin-binding monooxygenase stcW are both required for the conversion of averufin to 1-hydroxyversicolorone. The esterase stcI probably catalyzes the formation of versiconal hemiacetal acetate from 1-hydroxyversicolorone. The oxydoreductase stcN then probably catalyzes the biosynthetic step from versiconal to versicolorin B (VERB). The next step is performed by the versicolorin B desaturase stcL to produce versicolorin A (VERA). The ketoreductase stcU and the cytochrome P450 monooxygenase stcS are involved in the conversion of versicolorin A to demethylsterigmatocystin. The Baeyer-Villiger oxidas stcQ and the reductase stcR might be involved in the biosynthetic step from versicolorin A to demethylsterigmatocystin. The final step in the biosynthesis of sterigmatocystin is the methylation of demethylsterigmatocystin catalyzed by the methyltransferase stcP. This is Norsolorinic acid reductase stcV from Emericella nidulans (strain FGSC A4 / ATCC 38163 / CBS 112.46 / NRRL 194 / M139) (Aspergillus nidulans).